The following is a 71-amino-acid chain: ATP synthase F(0) complex subunit e, mitochondrial (71 aa).

At Lys-34 the chain carries N6-acetyllysine. At Ser-68 the chain carries Phosphoserine.

Belongs to the ATPase e subunit family. As to quaternary structure, component of the ATP synthase complex composed at least of ATP5F1A/subunit alpha, ATP5F1B/subunit beta, ATP5MC1/subunit c (homooctomer), MT-ATP6/subunit a, MT-ATP8/subunit 8, ATP5ME/subunit e, ATP5MF/subunit f, ATP5MG/subunit g, ATP5MK/subunit k, ATP5MJ/subunit j, ATP5F1C/subunit gamma, ATP5F1D/subunit delta, ATP5F1E/subunit epsilon, ATP5PF/subunit F6, ATP5PB/subunit b, ATP5PD/subunit d, ATP5PO/subunit OSCP. ATP synthase complex consists of a soluble F(1) head domain (subunits alpha(3) and beta(3)) - the catalytic core - and a membrane F(0) domain - the membrane proton channel (subunits c, a, 8, e, f, g, k and j). These two domains are linked by a central stalk (subunits gamma, delta, and epsilon) rotating inside the F1 region and a stationary peripheral stalk (subunits F6, b, d, and OSCP).

The protein resides in the mitochondrion. Its subcellular location is the mitochondrion inner membrane. Its function is as follows. Subunit e, of the mitochondrial membrane ATP synthase complex (F(1)F(0) ATP synthase or Complex V) that produces ATP from ADP in the presence of a proton gradient across the membrane which is generated by electron transport complexes of the respiratory chain. ATP synthase complex consist of a soluble F(1) head domain - the catalytic core - and a membrane F(1) domain - the membrane proton channel. These two domains are linked by a central stalk rotating inside the F(1) region and a stationary peripheral stalk. During catalysis, ATP synthesis in the catalytic domain of F(1) is coupled via a rotary mechanism of the central stalk subunits to proton translocation. In vivo, can only synthesize ATP although its ATP hydrolase activity can be activated artificially in vitro. Part of the complex F(0) domain. The protein is ATP synthase F(0) complex subunit e, mitochondrial of Rattus norvegicus (Rat).